The sequence spans 336 residues: Protease HtpX homolog (336 aa).

The next 2 helical transmembrane spans lie at 7-24 (AMLLAAMTALFMGVGFLI) and 29-48 (GMMIALLIAAGTNLFSYWNA). Residue histidine 130 participates in Zn(2+) binding. The active site involves glutamate 131. Histidine 134 contributes to the Zn(2+) binding site. Helical transmembrane passes span 145–165 (IVATFAGAISMLGNFAFFLGG) and 171–191 (PFGFVGVLAAMIVAPFAAMIV). Glutamate 200 lines the Zn(2+) pocket. Residues 278-287 (QQMAGGTQAA) are compositionally biased toward low complexity. The tract at residues 278–336 (QQMAGGTQAAPRPTPRQAGEQQPSGPWGQAPQAEQPAEPERPKANPWGRNPTGPKGRWS) is disordered.

Belongs to the peptidase M48B family. The cofactor is Zn(2+).

It localises to the cell inner membrane. The sequence is that of Protease HtpX homolog from Mesorhizobium japonicum (strain LMG 29417 / CECT 9101 / MAFF 303099) (Mesorhizobium loti (strain MAFF 303099)).